Consider the following 325-residue polypeptide: Polyprenyl transferase mpaA (325 aa).

3 consecutive transmembrane segments (helical) span residues 27–47 (MPYYTMMAAVWSTLIAGALKL), 56–76 (VEYILFKAGLCFVHCLLLCGA), and 108–128 (VEALVWMVGQYFLSVKMLDLI). A glycan (N-linked (GlcNAc...) asparagine) is linked at N131. A run of 6 helical transmembrane segments spans residues 134–151 (IWGLMLPLTASIMLYPYL), 159–179 (VFIYPQYILGLAVAYPSITGW), 192–212 (IFTHCTPICLLIFFWCLYFNT), 240–260 (LFLAFLGALPLAVIPYVVLKI), 262–282 (SPWLWFSWMAVWTVSIVMQIV), and 295–315 (IHWDNFLLGLWTTVACIVEVG).

Belongs to the UbiA prenyltransferase family. Mg(2+) serves as cofactor.

It localises to the golgi apparatus membrane. The enzyme catalyses 5,7-dihydroxy-4-methylphthalide + (2E,6E)-farnesyl diphosphate = 4-farnesyl-3,5-dihydroxy-6-methylphthalide + diphosphate. It functions in the pathway secondary metabolite biosynthesis; terpenoid biosynthesis. Polyprenyl transferase; part of the gene cluster that mediates the biosynthesis of mycophenolic acid (MPA), the first isolated antibiotic natural product in the world obtained from a culture of Penicillium brevicompactum in 1893. MpaA is a Golgi apparatus-associated enzyme that catalyzes the prenylation of 5,7-dihydroxy-4,6-dimethylphthalide (DHMP) to yield farnesyl-DHMP (FDHMP). The first step of the pathway is the synthesis of 5-methylorsellinic acid (5MOA) by the cytosolic polyketide synthase mpaC. 5MOA is then converted to the phthalide compound 5,7-dihydroxy-4,6-dimethylphthalide (DHMP) by the endoplasmic reticulum-bound cytochrome P450 monooxygenase mpaDE. MpaDE first catalyzes hydroxylation of 5-MOA to 4,6-dihydroxy-2-(hydroxymethyl)-3-methylbenzoic acid (DHMB). MpaDE then acts as a lactone synthase that catalyzes the ring closure to convert DHMB into DHMP. The next step is the prenylation of DHMP by the Golgi apparatus-associated prenyltransferase mpaA to yield farnesyl-DHMP (FDHMP). The ER-bound oxygenase mpaB then mediates the oxidative cleavage the C19-C20 double bond in FDHMP to yield FDHMP-3C via a mycophenolic aldehyde intermediate. The O-methyltransferase mpaG catalyzes the methylation of FDHMP-3C to yield MFDHMP-3C. After the cytosolic methylation of FDHMP-3C, MFDHMP-3C enters into peroxisomes probably via free diffusion due to its low molecular weight. Upon a peroxisomal CoA ligation reaction, catalyzed by a beta-oxidation component enzyme acyl-CoA ligase ACL891, MFDHMP-3C-CoA would then be restricted to peroxisomes for the following beta-oxidation pathway steps. The peroxisomal beta-oxidation machinery than converts MFDHMP-3C-CoA into MPA_CoA, via a beta-oxidation chain-shortening process. Finally mpaH acts as a peroxisomal acyl-CoA hydrolase with high substrate specificity toward MPA-CoA to release the final product MPA. In Penicillium roqueforti (strain FM164), this protein is Polyprenyl transferase mpaA.